We begin with the raw amino-acid sequence, 466 residues long: MGVFVVLLSIATLFGSTSGTALGPRGNHSDCTSVDRGYQCFPELSHKWGLYAPYFSLQDESPFPLDVPDDCHITFVQVLARHGARSPTDSKTKAYAATIAAIQKNATALPGKYAFLKSYNYSMGSENLNPFGRNQLQDLGAQFYRRYDTLTRHINPFVRAADSSRVHESAEKFVEGFQNARQGDPHANPHQPSPRVDVVIPEGTAYNNTLEHSICTAFEASTVGDAAADNFTAVFAPAIAKRLEADLPGVQLSADDVVNLMAMCPFETVSLTDDAHTLSPFCDLFTAAEWTQYNYLLSLDKYYGYGGGNPLGPVQGVGWANELIARLTRSPVHDHTCVNNTLDANPATFPLNATLYADFSHDSNLVSIFWALGLYNGTKPLSQTTVEDITRTDGYAAAWTVPFAARAYIEMMQCRAEKQPLVRVLVNDRVMPLHGCAVDNLGRCKRDDFVEGLSFARAGGNWAECF.

The N-terminal stretch at 1-19 is a signal peptide; it reads MGVFVVLLSIATLFGSTSG. N-linked (GlcNAc...) asparagine glycosylation is present at Asn-27. Cysteines 31 and 40 form a disulfide. Positions 51, 81, 82, 85, and 88 each coordinate 1D-myo-inositol hexakisphosphate. Disulfide bonds link Cys-71–Cys-414, Cys-215–Cys-465, Cys-264–Cys-282, and Cys-436–Cys-444. His-82 serves as the catalytic Nucleophile. N-linked (GlcNAc...) asparagine glycosylation is found at Asn-105 and Asn-120. Residue Arg-165 coordinates 1D-myo-inositol hexakisphosphate. N-linked (GlcNAc...) asparagine glycans are attached at residues Asn-207 and Asn-230. 1D-myo-inositol hexakisphosphate is bound at residue Lys-301. Asn-339 and Asn-352 each carry an N-linked (GlcNAc...) asparagine glycan. Positions 361 and 362 each coordinate 1D-myo-inositol hexakisphosphate. Asn-376 is a glycosylation site (N-linked (GlcNAc...) asparagine).

Belongs to the histidine acid phosphatase family. As to quaternary structure, monomer.

Its subcellular location is the secreted. The catalysed reaction is 1D-myo-inositol hexakisphosphate + H2O = 1D-myo-inositol 1,2,4,5,6-pentakisphosphate + phosphate. It catalyses the reaction 1D-myo-inositol 1,2,4,5,6-pentakisphosphate + H2O = 1D-myo-inositol 1,2,5,6-tetrakisphosphate + phosphate. The enzyme catalyses 1D-myo-inositol 1,2,5,6-tetrakisphosphate + H2O = 1D-myo-inositol 1,2,6-trisphosphate + phosphate. It carries out the reaction 1D-myo-inositol 1,2,6-trisphosphate + H2O = 1D-myo-inositol 1,2-bisphosphate + phosphate. The catalysed reaction is 1D-myo-inositol 1,2-bisphosphate + H2O = 1D-myo-inositol 2-phosphate + phosphate. In terms of biological role, catalyzes the phosphate monoester hydrolysis of phytic acid (myo-inositol hexakisphosphate), which results in the stepwise formation of myo-inositol pentakis-, tetrakis-, tris-, bis-, and monophosphates, as well as the liberation of inorganic phosphate. Myo-inositol 2-monophosphate is the end product. Has a broad substrate specificity and is also able to dephosphorylate other classic acid phosphatase substrates such as p-nitrophenyl phosphate, phenyl phosphate, fructose 1,6-bisphosphate, glucose 6-phosphate, 3-phosphoglycerate, as well as ADP and ATP. The chain is Phytase A from Aspergillus terreus.